A 351-amino-acid chain; its full sequence is MLKRQLHSASKRSATRFSDALNKGPSFDDFLTGRAGKAAAVDPVLAASSDGKRLPKWLKTEIPKGKNLHNIREDLRGLGLHTVCEEARCPNIGECWGGSDKSKATATIMLMGDTCTRGCRFCSVKTNRNPGPLDPNEPENTAVAISKWGLGYVVLTTVDRDDLSDGGSWHFADTVKRIKEKAPHILVETLSGDFRGNLDHVTTLAESGLDVFAHNMETVEALTPFVRDRRATFQQSLSVLRQAKVAVPDLITKTSIMLGFGETDEQVEDTLMQLRGVGVDIVTFGQYMRPTIRHLKVAEYVTPEKFDYWQKRAMDMGFLYCASGPLVRSSYKAGEVFIENVLKKRNAAKAV.

The [4Fe-4S] cluster site is built by Cys-84, Cys-89, Cys-95, Cys-115, Cys-119, Cys-122, and Ser-330. The Radical SAM core domain occupies 100-319 (DKSKATATIM…QKRAMDMGFL (220 aa)).

It belongs to the radical SAM superfamily. Lipoyl synthase family. [4Fe-4S] cluster is required as a cofactor.

The protein resides in the mitochondrion. The catalysed reaction is [[Fe-S] cluster scaffold protein carrying a second [4Fe-4S](2+) cluster] + N(6)-octanoyl-L-lysyl-[protein] + 2 oxidized [2Fe-2S]-[ferredoxin] + 2 S-adenosyl-L-methionine + 4 H(+) = [[Fe-S] cluster scaffold protein] + N(6)-[(R)-dihydrolipoyl]-L-lysyl-[protein] + 4 Fe(3+) + 2 hydrogen sulfide + 2 5'-deoxyadenosine + 2 L-methionine + 2 reduced [2Fe-2S]-[ferredoxin]. It functions in the pathway protein modification; protein lipoylation via endogenous pathway; protein N(6)-(lipoyl)lysine from octanoyl-[acyl-carrier-protein]: step 2/2. Its function is as follows. Catalyzes the radical-mediated insertion of two sulfur atoms into the C-6 and C-8 positions of the octanoyl moiety bound to the lipoyl domains of lipoate-dependent enzymes, thereby converting the octanoylated domains into lipoylated derivatives. In Yarrowia lipolytica (strain CLIB 122 / E 150) (Yeast), this protein is Lipoyl synthase, mitochondrial.